A 332-amino-acid polypeptide reads, in one-letter code: o-succinylbenzoate synthase (332 aa).

Catalysis depends on K135, which acts as the Proton donor. Positions 163, 192, and 215 each coordinate Mg(2+). K241 acts as the Proton acceptor in catalysis.

The protein belongs to the mandelate racemase/muconate lactonizing enzyme family. MenC type 1 subfamily. A divalent metal cation is required as a cofactor.

It catalyses the reaction (1R,6R)-6-hydroxy-2-succinyl-cyclohexa-2,4-diene-1-carboxylate = 2-succinylbenzoate + H2O. Its pathway is quinol/quinone metabolism; 1,4-dihydroxy-2-naphthoate biosynthesis; 1,4-dihydroxy-2-naphthoate from chorismate: step 4/7. The protein operates within quinol/quinone metabolism; menaquinone biosynthesis. In terms of biological role, converts 2-succinyl-6-hydroxy-2,4-cyclohexadiene-1-carboxylate (SHCHC) to 2-succinylbenzoate (OSB). In Vibrio cholerae serotype O1 (strain ATCC 39315 / El Tor Inaba N16961), this protein is o-succinylbenzoate synthase.